Consider the following 285-residue polypeptide: tRNA pseudouridine synthase A (285 aa).

Residue D69 is the Nucleophile of the active site. Y127 contacts substrate.

Belongs to the tRNA pseudouridine synthase TruA family. As to quaternary structure, homodimer.

It catalyses the reaction uridine(38/39/40) in tRNA = pseudouridine(38/39/40) in tRNA. Its function is as follows. Formation of pseudouridine at positions 38, 39 and 40 in the anticodon stem and loop of transfer RNAs. The chain is tRNA pseudouridine synthase A from Pseudomonas aeruginosa (strain ATCC 15692 / DSM 22644 / CIP 104116 / JCM 14847 / LMG 12228 / 1C / PRS 101 / PAO1).